The primary structure comprises 999 residues: Hypoxia up-regulated protein 1 (999 aa).

The signal sequence occupies residues 1 to 32 (MADKVRRQRPRRRVCWALVAVLLADLLALSDT). N-linked (GlcNAc...) asparagine glycans are attached at residues Asn155, Asn222, and Asn515. Phosphoserine is present on Ser567. Positions 578–694 (GNTISSLFGG…KKQKPARKRR (117 aa)) are disordered. Asn596 is a glycosylation site (N-linked (GlcNAc...) asparagine). Basic and acidic residues-rich tracts occupy residues 611–626 (GSKD…KEEA) and 641–672 (PKGD…KAEA). Residues Asn830, Asn862, and Asn869 are each glycosylated (N-linked (GlcNAc...) asparagine). N6-acetyllysine is present on Lys883. The segment at 909 to 999 (AKFTKPRPRP…QKRPLKNDEL (91 aa)) is disordered. N-linked (GlcNAc...) asparagine glycosylation is found at Asn922 and Asn931. The Prevents secretion from ER motif lies at 996 to 999 (NDEL).

The protein belongs to the heat shock protein 70 family. As to quaternary structure, part of a large chaperone multiprotein complex comprising DNAJB11, HSP90B1, HSPA5, HYOU, PDIA2, PDIA4, PDIA6, PPIB, SDF2L1, UGGT1 and very small amounts of ERP29, but not, or at very low levels, CALR nor CANX. As to expression, highly expressed in tissues that contain well-developed endoplasmic reticulum and synthesize large amounts of secretory proteins. Highly expressed in liver and pancreas and lower expression in brain and kidney. Also expressed in macrophages within aortic atherosclerotic plaques, and in breast cancers.

It is found in the endoplasmic reticulum lumen. Its function is as follows. Has a pivotal role in cytoprotective cellular mechanisms triggered by oxygen deprivation. Promotes HSPA5/BiP-mediated ATP nucleotide exchange and thereby activates the unfolded protein response (UPR) pathway in the presence of endoplasmic reticulum stress. May play a role as a molecular chaperone and participate in protein folding. The polypeptide is Hypoxia up-regulated protein 1 (HYOU1) (Homo sapiens (Human)).